The sequence spans 860 residues: Rod cGMP-specific 3',5'-cyclic phosphodiesterase subunit alpha (860 aa).

Gly-2 bears the N-acetylglycine mark. GAF domains lie at 73–222 (QTEK…NLIM) and 254–431 (DIER…GWSV). Positions 483-816 (EEEELAEILQ…KEWKALADEY (334 aa)) constitute a PDEase domain. His-559 (proton donor) is an active-site residue. A divalent metal cation contacts are provided by His-563, His-599, Asp-600, and Asp-720. The segment at 821–860 (KVQEEKKQKQQSAKSAAAGNQPGGNPSPGGATTSKSCCIQ) is disordered. The span at 830-851 (QQSAKSAAAGNQPGGNPSPGGA) shows a compositional bias: low complexity. Position 857 is a cysteine methyl ester (Cys-857). Cys-857 carries S-farnesyl cysteine lipidation. The propeptide at 858–860 (CIQ) is removed in mature form.

Belongs to the cyclic nucleotide phosphodiesterase family. As to quaternary structure, oligomer composed of two catalytic chains (alpha and beta), an inhibitory chain (gamma) and the delta chain. A divalent metal cation serves as cofactor.

The protein localises to the cell membrane. The protein resides in the cell projection. It localises to the cilium. Its subcellular location is the photoreceptor outer segment. The catalysed reaction is 3',5'-cyclic GMP + H2O = GMP + H(+). Rod-specific cGMP phosphodiesterase that catalyzes the hydrolysis of 3',5'-cyclic GMP. This protein participates in processes of transmission and amplification of the visual signal. This chain is Rod cGMP-specific 3',5'-cyclic phosphodiesterase subunit alpha, found in Homo sapiens (Human).